The sequence spans 557 residues: Eudesmanediol synthase (557 aa).

Residues aspartate 310 and aspartate 314 each coordinate Mg(2+). Residues aspartate 310, aspartate 314, arginine 450, and asparagine 453 each coordinate substrate. Residues 310 to 314 (DDTFD) carry the DDXXD motif motif. Asparagine 453 and serine 457 together coordinate Mg(2+).

Belongs to the terpene synthase family. In terms of assembly, monomer. Requires Mg(2+) as cofactor. The cofactor is Mn(2+). As to expression, specifically expressed in roots.

The protein resides in the cytoplasm. It catalyses the reaction (2E,6E)-farnesyl diphosphate + 2 H2O = 7-epi-ent-eudesmane-5,11-diol + diphosphate. The protein operates within secondary metabolite biosynthesis; terpenoid biosynthesis. Component of the volatile terpenes biosynthesis pathways. Dihydroxylated sesquiterpenoid synthase that generates dually hydroxylated products directly from (E,E)-farnesyl diphosphate, primarily eudesmane-2,11-diol, along with two closely related structural isomers. The protein is Eudesmanediol synthase of Zea mays (Maize).